A 208-amino-acid polypeptide reads, in one-letter code: Single-stranded DNA-binding protein DdrA (208 aa).

It belongs to the RAD52 family. In terms of assembly, homooligomer composed of 8 to 10 subunits; probably arranged in a ring-structure.

SsDNA-binding protein that contributes to the ionizing radiation resistance of D.radiodurans. Plays a role in DNA repair and genome reconstitution, in a RecA-independent process, since DdrA is essential for recovery from severe genomic fragmentation as a result of exposure to severe levels of ionizing radiation in an environment lacking nutrients. In vitro, binds to the 3'-ends of single-stranded DNA, protecting them from nuclease degradation. Thus, DdrA is part of a DNA end-protection system that helps to preserve genome integrity following irradiation or desiccation. Does not display DNA strand annealing activity, unlike eukaryotic Rad52 protein homologs. The polypeptide is Single-stranded DNA-binding protein DdrA (ddrA) (Deinococcus radiodurans (strain ATCC 13939 / DSM 20539 / JCM 16871 / CCUG 27074 / LMG 4051 / NBRC 15346 / NCIMB 9279 / VKM B-1422 / R1)).